We begin with the raw amino-acid sequence, 372 residues long: Glutamate 5-kinase (372 aa).

Lys-14 is a binding site for ATP. Substrate-binding residues include Ser-54, Asp-141, and Asn-153. Residues Thr-173 to Asp-174 and Thr-215 to Lys-221 contribute to the ATP site. Residues Ala-280–Val-358 enclose the PUA domain.

This sequence belongs to the glutamate 5-kinase family.

The protein resides in the cytoplasm. The enzyme catalyses L-glutamate + ATP = L-glutamyl 5-phosphate + ADP. Its pathway is amino-acid biosynthesis; L-proline biosynthesis; L-glutamate 5-semialdehyde from L-glutamate: step 1/2. Its function is as follows. Catalyzes the transfer of a phosphate group to glutamate to form L-glutamate 5-phosphate. This chain is Glutamate 5-kinase, found in Laribacter hongkongensis (strain HLHK9).